Consider the following 225-residue polypeptide: Phosphoribosylformylglycinamidine synthase subunit PurQ (225 aa).

The 220-residue stretch at 6–225 (FGVVVFPGSN…WQSILRSFAA (220 aa)) folds into the Glutamine amidotransferase type-1 domain. The active-site Nucleophile is the cysteine 89. Residues histidine 198 and glutamate 200 contribute to the active site.

As to quaternary structure, part of the FGAM synthase complex composed of 1 PurL, 1 PurQ and 2 PurS subunits.

It is found in the cytoplasm. It carries out the reaction N(2)-formyl-N(1)-(5-phospho-beta-D-ribosyl)glycinamide + L-glutamine + ATP + H2O = 2-formamido-N(1)-(5-O-phospho-beta-D-ribosyl)acetamidine + L-glutamate + ADP + phosphate + H(+). The catalysed reaction is L-glutamine + H2O = L-glutamate + NH4(+). It participates in purine metabolism; IMP biosynthesis via de novo pathway; 5-amino-1-(5-phospho-D-ribosyl)imidazole from N(2)-formyl-N(1)-(5-phospho-D-ribosyl)glycinamide: step 1/2. Functionally, part of the phosphoribosylformylglycinamidine synthase complex involved in the purines biosynthetic pathway. Catalyzes the ATP-dependent conversion of formylglycinamide ribonucleotide (FGAR) and glutamine to yield formylglycinamidine ribonucleotide (FGAM) and glutamate. The FGAM synthase complex is composed of three subunits. PurQ produces an ammonia molecule by converting glutamine to glutamate. PurL transfers the ammonia molecule to FGAR to form FGAM in an ATP-dependent manner. PurS interacts with PurQ and PurL and is thought to assist in the transfer of the ammonia molecule from PurQ to PurL. This is Phosphoribosylformylglycinamidine synthase subunit PurQ from Synechococcus sp. (strain JA-2-3B'a(2-13)) (Cyanobacteria bacterium Yellowstone B-Prime).